The primary structure comprises 74 residues: MFTMKKSLLLFFFLGTISLSLCQEERNADEDDGEMTEEEKRGILDTLKNLAKTAGKGILKSLVNTASCKLSGQC.

A signal peptide spans 1–22 (MFTMKKSLLLFFFLGTISLSLC). A propeptide spanning residues 23 to 41 (QEERNADEDDGEMTEEEKR) is cleaved from the precursor. Cys-68 and Cys-74 form a disulfide bridge.

This sequence belongs to the frog skin active peptide (FSAP) family. Brevinin subfamily. Expressed by the skin glands.

It localises to the secreted. Functionally, antimicrobial peptide. The protein is Brevinin-2Ta of Rana temporaria (European common frog).